Consider the following 544-residue polypeptide: Chaperonin GroEL (544 aa).

ATP is bound by residues 30–33 (TLGP), lysine 51, 87–91 (DGTTT), glycine 415, and aspartate 495.

Belongs to the chaperonin (HSP60) family. In terms of assembly, forms a cylinder of 14 subunits composed of two heptameric rings stacked back-to-back. Interacts with the co-chaperonin GroES.

It is found in the cytoplasm. The enzyme catalyses ATP + H2O + a folded polypeptide = ADP + phosphate + an unfolded polypeptide.. Functionally, together with its co-chaperonin GroES, plays an essential role in assisting protein folding. The GroEL-GroES system forms a nano-cage that allows encapsulation of the non-native substrate proteins and provides a physical environment optimized to promote and accelerate protein folding. The protein is Chaperonin GroEL of Agrobacterium fabrum (strain C58 / ATCC 33970) (Agrobacterium tumefaciens (strain C58)).